A 295-amino-acid polypeptide reads, in one-letter code: Probable lipid kinase YegS-like (295 aa).

The 129-residue stretch at 1-129 (MQGRKAMLVL…IDLGQAGDQL (129 aa)) folds into the DAGKc domain. Residues Thr-39, 65–71 (GDGTLRD), and Thr-92 contribute to the ATP site. 3 residues coordinate Mg(2+): Met-210, Asp-213, and Leu-215. The active-site Proton acceptor is Glu-264.

Belongs to the diacylglycerol/lipid kinase family. YegS lipid kinase subfamily. Mg(2+) serves as cofactor. Requires Ca(2+) as cofactor.

It localises to the cytoplasm. In terms of biological role, probably phosphorylates lipids; the in vivo substrate is unknown. The polypeptide is Probable lipid kinase YegS-like (Pseudomonas putida (strain ATCC 47054 / DSM 6125 / CFBP 8728 / NCIMB 11950 / KT2440)).